The primary structure comprises 306 residues: Palmitoyl-protein thioesterase ABHD10, mitochondrial (306 aa).

A mitochondrion-targeting transit peptide spans 1–52 (MAGVGLAAVPAWVPCRRWGLAAVTFGFHHGLSTLLARKTERAPQWLRACRHK). An AB hydrolase-1 domain is found at 78–177 (IIFIPGYISN…KVVALVGVAT (100 aa)). Active-site charge relay system residues include Ser-152, Asp-249, and His-279.

It belongs to the AB hydrolase superfamily.

Its subcellular location is the mitochondrion. The enzyme catalyses S-hexadecanoyl-L-cysteinyl-[protein] + H2O = L-cysteinyl-[protein] + hexadecanoate + H(+). It catalyses the reaction mycophenolic acid O-acyl-beta-D-glucuronide + H2O = mycophenolate + D-glucuronate + H(+). Inhibited by palmostatin-B. Its function is as follows. Acts as an acyl-protein thioesterase that hydrolyzes fatty acids from acylated residues in proteins. Regulates the mitochondrial S-depalmitoylation of the nucleophilic active site residue of peroxiredoxin-5/PRDX5, a key antioxidant protein, therefore modulating mitochondrial antioxidant ability. Also catalyzes the deglucuronidation of mycophenolic acid acyl-glucuronide, an active metabolite of the immunosuppressant drug mycophenolate. This Bos taurus (Bovine) protein is Palmitoyl-protein thioesterase ABHD10, mitochondrial (ABHD10).